A 240-amino-acid polypeptide reads, in one-letter code: Manganese transport system ATP-binding protein MntB (240 aa).

The ABC transporter domain maps to 1-233; it reads MEIQGLTIAY…KIQFAYGDAP (233 aa). 33–40 is a binding site for ATP; the sequence is GPNGAGKS.

This sequence belongs to the ABC transporter superfamily.

The protein localises to the cell membrane. Functionally, this protein is probably a component of a manganese permease, a binding protein-dependent, ATP-driven transport system. Probably responsible for energy coupling to the transport system. In Listeria monocytogenes serovar 1/2a (strain ATCC BAA-679 / EGD-e), this protein is Manganese transport system ATP-binding protein MntB (mntB).